The following is a 451-amino-acid chain: Proline--tRNA ligase (451 aa).

The protein belongs to the class-II aminoacyl-tRNA synthetase family. ProS type 2 subfamily. As to quaternary structure, homodimer.

Its subcellular location is the cytoplasm. The catalysed reaction is tRNA(Pro) + L-proline + ATP = L-prolyl-tRNA(Pro) + AMP + diphosphate. Its function is as follows. Catalyzes the attachment of proline to tRNA(Pro) in a two-step reaction: proline is first activated by ATP to form Pro-AMP and then transferred to the acceptor end of tRNA(Pro). This Ruegeria sp. (strain TM1040) (Silicibacter sp.) protein is Proline--tRNA ligase.